A 236-amino-acid chain; its full sequence is E3 ubiquitin-protein ligase ATL41 (236 aa).

A helical membrane pass occupies residues 31-51 (IMLAAVASLSGVILIVFALHL). Residues 108-150 (CAVCLSVLKEQDKARELPNCKHIFHVDCVDTWLTTCSTCPVCR) form an RING-type; atypical zinc finger.

The protein belongs to the RING-type zinc finger family. ATL subfamily.

Its subcellular location is the membrane. It carries out the reaction S-ubiquitinyl-[E2 ubiquitin-conjugating enzyme]-L-cysteine + [acceptor protein]-L-lysine = [E2 ubiquitin-conjugating enzyme]-L-cysteine + N(6)-ubiquitinyl-[acceptor protein]-L-lysine.. It functions in the pathway protein modification; protein ubiquitination. Functionally, E3 ubiquitin-protein ligase able to catalyze polyubiquitination with ubiquitin-conjugating enzyme E2 UBC8, UBC10, UBC11, UBC28, UBC29, UBC30, UBC35 and UBC36 in vitro. This is E3 ubiquitin-protein ligase ATL41 (ATL41) from Arabidopsis thaliana (Mouse-ear cress).